Consider the following 598-residue polypeptide: Elongation factor 4 (598 aa).

A tr-type G domain is found at 4 to 181; it reads KKIRNFAIIA…AIVNLIPPPQ (178 aa). GTP contacts are provided by residues 16-21 and 128-131; these read DHGKST and NKID.

It belongs to the TRAFAC class translation factor GTPase superfamily. Classic translation factor GTPase family. LepA subfamily.

It localises to the cell membrane. The catalysed reaction is GTP + H2O = GDP + phosphate + H(+). In terms of biological role, required for accurate and efficient protein synthesis under certain stress conditions. May act as a fidelity factor of the translation reaction, by catalyzing a one-codon backward translocation of tRNAs on improperly translocated ribosomes. Back-translocation proceeds from a post-translocation (POST) complex to a pre-translocation (PRE) complex, thus giving elongation factor G a second chance to translocate the tRNAs correctly. Binds to ribosomes in a GTP-dependent manner. This is Elongation factor 4 from Mesomycoplasma hyopneumoniae (strain J / ATCC 25934 / NCTC 10110) (Mycoplasma hyopneumoniae).